Consider the following 243-residue polypeptide: 1-(5-phosphoribosyl)-5-[(5-phosphoribosylamino)methylideneamino] imidazole-4-carboxamide isomerase (243 aa).

The active-site Proton acceptor is Asp8. The active-site Proton donor is Asp129.

It belongs to the HisA/HisF family.

Its subcellular location is the cytoplasm. It catalyses the reaction 1-(5-phospho-beta-D-ribosyl)-5-[(5-phospho-beta-D-ribosylamino)methylideneamino]imidazole-4-carboxamide = 5-[(5-phospho-1-deoxy-D-ribulos-1-ylimino)methylamino]-1-(5-phospho-beta-D-ribosyl)imidazole-4-carboxamide. It participates in amino-acid biosynthesis; L-histidine biosynthesis; L-histidine from 5-phospho-alpha-D-ribose 1-diphosphate: step 4/9. This Brucella anthropi (strain ATCC 49188 / DSM 6882 / CCUG 24695 / JCM 21032 / LMG 3331 / NBRC 15819 / NCTC 12168 / Alc 37) (Ochrobactrum anthropi) protein is 1-(5-phosphoribosyl)-5-[(5-phosphoribosylamino)methylideneamino] imidazole-4-carboxamide isomerase.